The primary structure comprises 274 residues: Formamidopyrimidine-DNA glycosylase (274 aa).

Pro-2 serves as the catalytic Schiff-base intermediate with DNA. Catalysis depends on Glu-3, which acts as the Proton donor. Lys-57 acts as the Proton donor; for beta-elimination activity in catalysis. His-90, Arg-109, and Lys-150 together coordinate DNA. The FPG-type zinc-finger motif lies at 235-269 (FVYGRKDKACLICGHTIESIKQGQRSTFFCRHCQH). Arg-259 acts as the Proton donor; for delta-elimination activity in catalysis.

Belongs to the FPG family. In terms of assembly, monomer. Zn(2+) is required as a cofactor.

The enzyme catalyses Hydrolysis of DNA containing ring-opened 7-methylguanine residues, releasing 2,6-diamino-4-hydroxy-5-(N-methyl)formamidopyrimidine.. It catalyses the reaction 2'-deoxyribonucleotide-(2'-deoxyribose 5'-phosphate)-2'-deoxyribonucleotide-DNA = a 3'-end 2'-deoxyribonucleotide-(2,3-dehydro-2,3-deoxyribose 5'-phosphate)-DNA + a 5'-end 5'-phospho-2'-deoxyribonucleoside-DNA + H(+). In terms of biological role, involved in base excision repair of DNA damaged by oxidation or by mutagenic agents. Acts as a DNA glycosylase that recognizes and removes damaged bases. Has a preference for oxidized purines, such as 7,8-dihydro-8-oxoguanine (8-oxoG). Has AP (apurinic/apyrimidinic) lyase activity and introduces nicks in the DNA strand. Cleaves the DNA backbone by beta-delta elimination to generate a single-strand break at the site of the removed base with both 3'- and 5'-phosphates. The polypeptide is Formamidopyrimidine-DNA glycosylase (Proteus mirabilis (strain HI4320)).